Consider the following 397-residue polypeptide: MAIRIKLKPGRERSLERRHPWVFSNGIHNVNGGKPQAGDTVDVVAHDGRWLGRGAWSPESQIQVRIWTFDKEEAIDADFFARRIQRAQAGREDLIREQGLTGYRLIAAESDGLPGITIDRYADVLVCQLLNTGAEKWRDTLVEQLALQFPGCAIYERSDVDSRKKEGLAPVQGLLHGELPAMPIIIEENGIKIAVDVVKGHKTGFYLDQRDNRAIAARFVKGKSVLNCFCYTGTFGLYAAKAGAASIENVDVSALALQTARDNMAINGLDDSHVNYHEADVFKLLRQYRDEGKTFDVIVLDPPKFADNKSQLNGACRGYKDINMIAMQLLNPGGILLTFSCSGLMESDLFQKVVADAALDAKREVQFVERMHQASDHPISSAFPEGYYLKGLVARVW.

The 79-residue stretch at 2–80 folds into the PUA domain; the sequence is AIRIKLKPGR…KEEAIDADFF (79 aa).

Belongs to the methyltransferase superfamily. RlmI family.

It is found in the cytoplasm. It catalyses the reaction cytidine(1962) in 23S rRNA + S-adenosyl-L-methionine = 5-methylcytidine(1962) in 23S rRNA + S-adenosyl-L-homocysteine + H(+). Its function is as follows. Specifically methylates the cytosine at position 1962 (m5C1962) of 23S rRNA. This Shewanella denitrificans (strain OS217 / ATCC BAA-1090 / DSM 15013) protein is Ribosomal RNA large subunit methyltransferase I.